Here is an 84-residue protein sequence, read N- to C-terminus: Small ribosomal subunit protein uS17 (84 aa).

Belongs to the universal ribosomal protein uS17 family. As to quaternary structure, part of the 30S ribosomal subunit.

One of the primary rRNA binding proteins, it binds specifically to the 5'-end of 16S ribosomal RNA. This Clostridium beijerinckii (strain ATCC 51743 / NCIMB 8052) (Clostridium acetobutylicum) protein is Small ribosomal subunit protein uS17.